The following is a 228-amino-acid chain: U1 small nuclear ribonucleoprotein C (228 aa).

The Matrin-type; degenerate zinc finger occupies 11–43; sequence ATVDYCDIFLTHDSASVRKAHNTGWKHKMQVEH. The interval 83 to 127 is disordered; sequence GQRGQPVGGPPRPPQPFHNGGRPGPPGRPPMGMFPPQRPMMPPPH. Residues 105-127 are compositionally biased toward pro residues; sequence PGPPGRPPMGMFPPQRPMMPPPH.

Belongs to the U1 small nuclear ribonucleoprotein C family. U1 snRNP is composed of the 7 core Sm proteins B/B', D1, D2, D3, E, F and G that assemble in a heptameric protein ring on the Sm site of the small nuclear RNA to form the core snRNP, and at least 3 U1 snRNP-specific proteins U1-70K, U1-A and U1-C. U1-C interacts with U1 snRNA and the 5' splice-site region of the pre-mRNA.

The protein localises to the nucleus. Component of the spliceosomal U1 snRNP, which is essential for recognition of the pre-mRNA 5' splice-site and the subsequent assembly of the spliceosome. U1-C is directly involved in initial 5' splice-site recognition for both constitutive and regulated alternative splicing. The interaction with the 5' splice-site seems to precede base-pairing between the pre-mRNA and the U1 snRNA. Stimulates commitment or early (E) complex formation by stabilizing the base pairing of the 5' end of the U1 snRNA and the 5' splice-site region. This chain is U1 small nuclear ribonucleoprotein C, found in Batrachochytrium dendrobatidis (strain JAM81 / FGSC 10211) (Frog chytrid fungus).